The following is a 165-amino-acid chain: MANEKTQSDLNEKLIAVNRVSKTVKGGRIFSFTALTVVGDGNGRIGFGYGKAREVPAAIQKSMEKARRNMVTVALNEGTLHHAVKGRHTGSKVYMQPASEGTGIIAGGAMRAVLEVAGIRNVLAKAYGSTNPINVVRATIAGLSGMNSPEMIAAKRGLSVKEILG.

The S5 DRBM domain occupies 10 to 73 (LNEKLIAVNR…EKARRNMVTV (64 aa)).

This sequence belongs to the universal ribosomal protein uS5 family. In terms of assembly, part of the 30S ribosomal subunit. Contacts proteins S4 and S8.

With S4 and S12 plays an important role in translational accuracy. Functionally, located at the back of the 30S subunit body where it stabilizes the conformation of the head with respect to the body. The protein is Small ribosomal subunit protein uS5 of Photobacterium profundum (strain SS9).